The following is a 453-amino-acid chain: Trigger factor (453 aa).

The PPIase FKBP-type domain occupies 171 to 256 (GDRITISFKG…VSLIEAPEEL (86 aa)).

It belongs to the FKBP-type PPIase family. Tig subfamily.

Its subcellular location is the cytoplasm. It carries out the reaction [protein]-peptidylproline (omega=180) = [protein]-peptidylproline (omega=0). In terms of biological role, involved in protein export. Acts as a chaperone by maintaining the newly synthesized protein in an open conformation. Functions as a peptidyl-prolyl cis-trans isomerase. This is Trigger factor from Nitrobacter winogradskyi (strain ATCC 25391 / DSM 10237 / CIP 104748 / NCIMB 11846 / Nb-255).